The following is a 253-amino-acid chain: DNA repair protein RecO (253 aa).

Belongs to the RecO family.

Its function is as follows. Involved in DNA repair and RecF pathway recombination. In Pediococcus pentosaceus (strain ATCC 25745 / CCUG 21536 / LMG 10740 / 183-1w), this protein is DNA repair protein RecO.